A 196-amino-acid chain; its full sequence is Small ribosomal subunit protein uS4c (196 aa).

The segment at 15–42 is disordered; the sequence is LGALPGLTRKTPKSGSNQKKKFNSGKKE. The 62-residue stretch at 89-150 folds into the S4 RNA-binding domain; it reads MRLDNILFRL…NQRSKRLVQN (62 aa).

This sequence belongs to the universal ribosomal protein uS4 family. Part of the 30S ribosomal subunit. Contacts protein S5. The interaction surface between S4 and S5 is involved in control of translational fidelity.

The protein resides in the plastid. The protein localises to the chloroplast. In terms of biological role, one of the primary rRNA binding proteins, it binds directly to 16S rRNA where it nucleates assembly of the body of the 30S subunit. With S5 and S12 plays an important role in translational accuracy. In Cenchrus longisetus (Feathertop), this protein is Small ribosomal subunit protein uS4c (rps4).